Consider the following 160-residue polypeptide: S-adenosylmethionine decarboxylase proenzyme (160 aa).

Ser-73 (schiff-base intermediate with substrate; via pyruvic acid) is an active-site residue. Residue Ser-73 is modified to Pyruvic acid (Ser); by autocatalysis. His-78 functions as the Proton acceptor; for processing activity in the catalytic mechanism. The active-site Proton donor; for catalytic activity is the Cys-93.

Belongs to the prokaryotic AdoMetDC family. Type 1 subfamily. In terms of assembly, heterotetramer of two alpha and two beta chains arranged as a dimer of alpha/beta heterodimers. It depends on pyruvate as a cofactor. Post-translationally, is synthesized initially as an inactive proenzyme. Formation of the active enzyme involves a self-maturation process in which the active site pyruvoyl group is generated from an internal serine residue via an autocatalytic post-translational modification. Two non-identical subunits are generated from the proenzyme in this reaction, and the pyruvate is formed at the N-terminus of the alpha chain, which is derived from the carboxyl end of the proenzyme. The post-translation cleavage follows an unusual pathway, termed non-hydrolytic serinolysis, in which the side chain hydroxyl group of the serine supplies its oxygen atom to form the C-terminus of the beta chain, while the remainder of the serine residue undergoes an oxidative deamination to produce ammonia and the pyruvoyl group blocking the N-terminus of the alpha chain.

The catalysed reaction is S-adenosyl-L-methionine + H(+) = S-adenosyl 3-(methylsulfanyl)propylamine + CO2. It functions in the pathway amine and polyamine biosynthesis; S-adenosylmethioninamine biosynthesis; S-adenosylmethioninamine from S-adenosyl-L-methionine: step 1/1. Its function is as follows. Catalyzes the decarboxylation of S-adenosylmethionine to S-adenosylmethioninamine (dcAdoMet), the propylamine donor required for the synthesis of the polyamines spermine and spermidine from the diamine putrescine. This Pseudomonas paraeruginosa (strain DSM 24068 / PA7) (Pseudomonas aeruginosa (strain PA7)) protein is S-adenosylmethionine decarboxylase proenzyme.